A 192-amino-acid polypeptide reads, in one-letter code: NF-kappa-B inhibitor-interacting Ras-like protein 1 (192 aa).

11 to 18 (GLLSVGKT) provides a ligand contact to GTP. The Effector region signature appears at 35-43 (DCETLEDVY). The interactions with NFKBIA and NFKBIB stretch occupies residues 58-93 (HLYDTRGLQKGVELPKHYFSFADGFVLVYSVNNLES). Residues 61–65 (DTRGL) and 120–123 (NKLD) each bind GTP. Positions 168–192 (LSQPQSKSSFPLPGRKNKGNSNPEN) are disordered.

The protein belongs to the small GTPase superfamily. Ras family. KappaB-Ras subfamily. As to quaternary structure, interacts with both NF-kappa-B inhibitor alpha (NFKBIA) and beta (NFKBIB) in vitro. However, it probably only interacts with NFKBIB in vivo. Forms a complex with NFKBIB and NF-kappa-B heterodimer (p50/NFKB1 and p65/RELA). Also interacts with c-Rel (REL).

The protein resides in the cytoplasm. Its function is as follows. Atypical Ras-like protein that acts as a potent regulator of NF-kappa-B activity by preventing the degradation of NF-kappa-B inhibitor beta (NFKBIB) by most signals, explaining why NFKBIB is more resistant to degradation. May act by blocking phosphorylation of NFKBIB and mediating cytoplasmic retention of p65/RELA NF-kappa-B subunit. It is unclear whether it acts as a GTPase. Both GTP- and GDP-bound forms block phosphorylation of NFKBIB. In Mus musculus (Mouse), this protein is NF-kappa-B inhibitor-interacting Ras-like protein 1 (Nkiras1).